The following is a 413-amino-acid chain: Queuine tRNA-ribosyltransferase accessory subunit 2 (413 aa).

Residues 298–321 form a disordered region; that stretch reads LEKSETSGAERNGDVGAESEEPDA. Residues Cys349, Cys351, Cys354, and His380 each coordinate Zn(2+).

It belongs to the queuine tRNA-ribosyltransferase family. QTRT2 subfamily. In terms of assembly, heterodimer of a catalytic subunit qtrt1 and an accessory subunit qtrt2. The cofactor is Zn(2+).

The protein resides in the cytoplasm. Its subcellular location is the mitochondrion outer membrane. Its function is as follows. Non-catalytic subunit of the queuine tRNA-ribosyltransferase (TGT) that catalyzes the base-exchange of a guanine (G) residue with queuine (Q) at position 34 (anticodon wobble position) in tRNAs with GU(N) anticodons (tRNA-Asp, -Asn, -His and -Tyr), resulting in the hypermodified nucleoside queuosine (7-(((4,5-cis-dihydroxy-2-cyclopenten-1-yl)amino)methyl)-7-deazaguanosine). This Xenopus tropicalis (Western clawed frog) protein is Queuine tRNA-ribosyltransferase accessory subunit 2.